Consider the following 185-residue polypeptide: NADH-quinone oxidoreductase subunit B (185 aa).

4 residues coordinate [4Fe-4S] cluster: cysteine 37, cysteine 38, cysteine 103, and cysteine 132.

The protein belongs to the complex I 20 kDa subunit family. In terms of assembly, NDH-1 is composed of 14 different subunits. Subunits NuoB, C, D, E, F, and G constitute the peripheral sector of the complex. [4Fe-4S] cluster is required as a cofactor.

Its subcellular location is the cell membrane. The enzyme catalyses a quinone + NADH + 5 H(+)(in) = a quinol + NAD(+) + 4 H(+)(out). Functionally, NDH-1 shuttles electrons from NADH, via FMN and iron-sulfur (Fe-S) centers, to quinones in the respiratory chain. The immediate electron acceptor for the enzyme in this species is believed to be a menaquinone. Couples the redox reaction to proton translocation (for every two electrons transferred, four hydrogen ions are translocated across the cytoplasmic membrane), and thus conserves the redox energy in a proton gradient. The chain is NADH-quinone oxidoreductase subunit B from Thermobifida fusca (strain YX).